The primary structure comprises 275 residues: Large ribosomal subunit protein uL2 (275 aa).

Residues 222 to 257 (GTAMNAVDHPHGGGRGRSKGNNQPRSPWNQPAKGFK) form a disordered region. Positions 240 to 250 (KGNNQPRSPWN) are enriched in polar residues.

This sequence belongs to the universal ribosomal protein uL2 family. As to quaternary structure, part of the 50S ribosomal subunit. Forms a bridge to the 30S subunit in the 70S ribosome.

One of the primary rRNA binding proteins. Required for association of the 30S and 50S subunits to form the 70S ribosome, for tRNA binding and peptide bond formation. It has been suggested to have peptidyltransferase activity; this is somewhat controversial. Makes several contacts with the 16S rRNA in the 70S ribosome. The sequence is that of Large ribosomal subunit protein uL2 from Endomicrobium trichonymphae.